Consider the following 69-residue polypeptide: Large ribosomal subunit protein bL31 (69 aa).

Residues cysteine 17, cysteine 19, cysteine 37, and cysteine 40 each coordinate Zn(2+).

The protein belongs to the bacterial ribosomal protein bL31 family. Type A subfamily. Part of the 50S ribosomal subunit. Zn(2+) serves as cofactor.

In terms of biological role, binds the 23S rRNA. The chain is Large ribosomal subunit protein bL31 from Caldicellulosiruptor bescii (strain ATCC BAA-1888 / DSM 6725 / KCTC 15123 / Z-1320) (Anaerocellum thermophilum).